Reading from the N-terminus, the 66-residue chain is Large ribosomal subunit protein bL35 (66 aa).

Belongs to the bacterial ribosomal protein bL35 family.

The protein is Large ribosomal subunit protein bL35 of Lysinibacillus sphaericus (strain C3-41).